A 287-amino-acid polypeptide reads, in one-letter code: ATP synthase gamma chain (287 aa).

It belongs to the ATPase gamma chain family. F-type ATPases have 2 components, CF(1) - the catalytic core - and CF(0) - the membrane proton channel. CF(1) has five subunits: alpha(3), beta(3), gamma(1), delta(1), epsilon(1). CF(0) has three main subunits: a, b and c.

It localises to the cell membrane. Produces ATP from ADP in the presence of a proton gradient across the membrane. The gamma chain is believed to be important in regulating ATPase activity and the flow of protons through the CF(0) complex. This is ATP synthase gamma chain from Geobacillus stearothermophilus (Bacillus stearothermophilus).